The primary structure comprises 379 residues: Carbamoyl phosphate synthase small chain (379 aa).

The segment at Met1–Ser187 is CPSase. The L-glutamine site is built by Ser48, Gly239, and Gly241. Residues Lys191–Arg378 enclose the Glutamine amidotransferase type-1 domain. Cys267 serves as the catalytic Nucleophile. Residues Leu268, Gln271, Asn309, Gly311, and Phe312 each contribute to the L-glutamine site. Catalysis depends on residues His351 and Glu353.

This sequence belongs to the CarA family. In terms of assembly, composed of two chains; the small (or glutamine) chain promotes the hydrolysis of glutamine to ammonia, which is used by the large (or ammonia) chain to synthesize carbamoyl phosphate. Tetramer of heterodimers (alpha,beta)4.

The enzyme catalyses hydrogencarbonate + L-glutamine + 2 ATP + H2O = carbamoyl phosphate + L-glutamate + 2 ADP + phosphate + 2 H(+). It catalyses the reaction L-glutamine + H2O = L-glutamate + NH4(+). The protein operates within amino-acid biosynthesis; L-arginine biosynthesis; carbamoyl phosphate from bicarbonate: step 1/1. It participates in pyrimidine metabolism; UMP biosynthesis via de novo pathway; (S)-dihydroorotate from bicarbonate: step 1/3. In terms of biological role, small subunit of the glutamine-dependent carbamoyl phosphate synthetase (CPSase). CPSase catalyzes the formation of carbamoyl phosphate from the ammonia moiety of glutamine, carbonate, and phosphate donated by ATP, constituting the first step of 2 biosynthetic pathways, one leading to arginine and/or urea and the other to pyrimidine nucleotides. The small subunit (glutamine amidotransferase) binds and cleaves glutamine to supply the large subunit with the substrate ammonia. The chain is Carbamoyl phosphate synthase small chain from Thioalkalivibrio sulfidiphilus (strain HL-EbGR7).